A 161-amino-acid chain; its full sequence is Cyclic pyranopterin monophosphate synthase (161 aa).

Substrate-binding positions include 75 to 77 (MCH) and 115 to 116 (ME). D130 is a catalytic residue.

The protein belongs to the MoaC family. In terms of assembly, homohexamer; trimer of dimers.

The enzyme catalyses (8S)-3',8-cyclo-7,8-dihydroguanosine 5'-triphosphate = cyclic pyranopterin phosphate + diphosphate. It participates in cofactor biosynthesis; molybdopterin biosynthesis. In terms of biological role, catalyzes the conversion of (8S)-3',8-cyclo-7,8-dihydroguanosine 5'-triphosphate to cyclic pyranopterin monophosphate (cPMP). The polypeptide is Cyclic pyranopterin monophosphate synthase (Bacillus cereus (strain ATCC 10987 / NRS 248)).